Consider the following 84-residue polypeptide: Cell division topological specificity factor (84 aa).

This sequence belongs to the MinE family.

In terms of biological role, prevents the cell division inhibition by proteins MinC and MinD at internal division sites while permitting inhibition at polar sites. This ensures cell division at the proper site by restricting the formation of a division septum at the midpoint of the long axis of the cell. The chain is Cell division topological specificity factor from Pseudomonas syringae pv. tomato (strain ATCC BAA-871 / DC3000).